We begin with the raw amino-acid sequence, 366 residues long: Aminomethyltransferase (366 aa).

This sequence belongs to the GcvT family. As to quaternary structure, the glycine cleavage system is composed of four proteins: P, T, L and H.

The enzyme catalyses N(6)-[(R)-S(8)-aminomethyldihydrolipoyl]-L-lysyl-[protein] + (6S)-5,6,7,8-tetrahydrofolate = N(6)-[(R)-dihydrolipoyl]-L-lysyl-[protein] + (6R)-5,10-methylene-5,6,7,8-tetrahydrofolate + NH4(+). Its function is as follows. The glycine cleavage system catalyzes the degradation of glycine. The sequence is that of Aminomethyltransferase from Bordetella parapertussis (strain 12822 / ATCC BAA-587 / NCTC 13253).